The chain runs to 270 residues: Formamidopyrimidine-DNA glycosylase (270 aa).

The active-site Schiff-base intermediate with DNA is P2. E3 functions as the Proton donor in the catalytic mechanism. Catalysis depends on K58, which acts as the Proton donor; for beta-elimination activity. 3 residues coordinate DNA: H90, R109, and R152. The FPG-type zinc finger occupies 237 to 270 (RVYGREGEACECGGAIVRVVQSGRSTFYCRKCQR). R260 (proton donor; for delta-elimination activity) is an active-site residue.

The protein belongs to the FPG family. Monomer. Zn(2+) serves as cofactor.

It catalyses the reaction Hydrolysis of DNA containing ring-opened 7-methylguanine residues, releasing 2,6-diamino-4-hydroxy-5-(N-methyl)formamidopyrimidine.. The catalysed reaction is 2'-deoxyribonucleotide-(2'-deoxyribose 5'-phosphate)-2'-deoxyribonucleotide-DNA = a 3'-end 2'-deoxyribonucleotide-(2,3-dehydro-2,3-deoxyribose 5'-phosphate)-DNA + a 5'-end 5'-phospho-2'-deoxyribonucleoside-DNA + H(+). Involved in base excision repair of DNA damaged by oxidation or by mutagenic agents. Acts as a DNA glycosylase that recognizes and removes damaged bases. Has a preference for oxidized purines, such as 7,8-dihydro-8-oxoguanine (8-oxoG). Has AP (apurinic/apyrimidinic) lyase activity and introduces nicks in the DNA strand. Cleaves the DNA backbone by beta-delta elimination to generate a single-strand break at the site of the removed base with both 3'- and 5'-phosphates. The protein is Formamidopyrimidine-DNA glycosylase of Sphingopyxis alaskensis (strain DSM 13593 / LMG 18877 / RB2256) (Sphingomonas alaskensis).